Reading from the N-terminus, the 410-residue chain is Na(+)-translocating NADH-quinone reductase subunit B (410 aa).

Helical transmembrane passes span 56 to 76, 119 to 139, and 159 to 179; these read MMIL…YNVG, LFGA…GGFW, and SILF…ALGI. Threonine 232 carries the FMN phosphoryl threonine modification. The next 5 membrane-spanning stretches (helical) occupy residues 266-286, 293-313, 318-338, 347-367, and 377-397; these read GSIG…IVFA, IIAG…FIGS, MFAM…GMLF, SFTN…CVLI, and GMML…YFVA.

Belongs to the NqrB/RnfD family. Composed of six subunits; NqrA, NqrB, NqrC, NqrD, NqrE and NqrF. Requires FMN as cofactor.

Its subcellular location is the cell inner membrane. The enzyme catalyses a ubiquinone + n Na(+)(in) + NADH + H(+) = a ubiquinol + n Na(+)(out) + NAD(+). In terms of biological role, NQR complex catalyzes the reduction of ubiquinone-1 to ubiquinol by two successive reactions, coupled with the transport of Na(+) ions from the cytoplasm to the periplasm. NqrA to NqrE are probably involved in the second step, the conversion of ubisemiquinone to ubiquinol. The sequence is that of Na(+)-translocating NADH-quinone reductase subunit B from Neisseria meningitidis serogroup A / serotype 4A (strain DSM 15465 / Z2491).